Reading from the N-terminus, the 436-residue chain is Ribulose bisphosphate carboxylase large chain (436 aa).

Residues Asn-104 and Thr-154 each contribute to the substrate site. Catalysis depends on Lys-156, which acts as the Proton acceptor. Position 158 (Lys-158) interacts with substrate. The Mg(2+) site is built by Lys-182, Asp-184, and Glu-185. Position 182 is an N6-carboxylysine (Lys-182). Residue His-275 is the Proton acceptor of the active site. Arg-276, His-308, and Ser-360 together coordinate substrate.

This sequence belongs to the RuBisCO large chain family. Type I subfamily. As to quaternary structure, heterohexadecamer of 8 large chains and 8 small chains; disulfide-linked. The disulfide link is formed within the large subunit homodimers. The cofactor is Mg(2+). The disulfide bond which can form in the large chain dimeric partners within the hexadecamer appears to be associated with oxidative stress and protein turnover.

Its subcellular location is the plastid. The protein resides in the chloroplast. It carries out the reaction 2 (2R)-3-phosphoglycerate + 2 H(+) = D-ribulose 1,5-bisphosphate + CO2 + H2O. The enzyme catalyses D-ribulose 1,5-bisphosphate + O2 = 2-phosphoglycolate + (2R)-3-phosphoglycerate + 2 H(+). Functionally, ruBisCO catalyzes two reactions: the carboxylation of D-ribulose 1,5-bisphosphate, the primary event in carbon dioxide fixation, as well as the oxidative fragmentation of the pentose substrate in the photorespiration process. Both reactions occur simultaneously and in competition at the same active site. The protein is Ribulose bisphosphate carboxylase large chain of Euglena geniculata.